The chain runs to 1114 residues: M-phase phosphoprotein 9 (1114 aa).

Disordered stretches follow at residues 1–55, 106–161, 183–207, 267–301, and 410–468; these read MEDF…KTGP, RPSC…DCHV, AKEPTEPLEPGAASQGQHPASVVQA, TSWAQRLKQNQSKQAHTEDDCSGPKPGSELNWKPP, and VLEP…STIP. Positions 24–51 are enriched in polar residues; the sequence is APQSLGLSLHANRSSPHLSTNGVSSFSG. A compositionally biased stretch (low complexity) spans 106–119; the sequence is RPSCSSSSVSEQVS. Polar residues predominate over residues 149-161; the sequence is QPASSTSYPDCHV. Polar residues-rich tracts occupy residues 267–280 and 429–446; these read TSWAQRLKQNQSKQ and HNPSQVSGFSKYPSTTRA. Residues 368–729 are required for its centrosomal localization; it reads LSQVLTLDPG…EAQVKQAEHE (362 aa). Positions 382 to 431 are interaction with CEP97; it reads KPKEHVAGIQAHGFLHALDDRISFSPDSVLEPSLSRHSDTDSSSQASHNP. The stretch at 574 to 733 forms a coiled coil; sequence DRCGQLDSAL…KQAEHESMLS (160 aa). The residue at position 710 (serine 710) is a Phosphoserine; by TTBK2. Residue lysine 713 forms a Glycyl lysine isopeptide (Lys-Gly) (interchain with G-Cter in ubiquitin) linkage. The residue at position 717 (serine 717) is a Phosphoserine; by TTBK2. 3 disordered regions span residues 727–755, 840–931, and 975–1002; these read EHESMLSLRNGAKVPERPSRSNSVATSDV, SWGT…GFSH, and EEKKYSEKNSDDPVNPSSCPEHSPNGLK. Residues 730–963 form an interaction with KIF24 region; sequence SMLSLRNGAK…PVSTLQQTTA (234 aa). The span at 852–868 shows a compositional bias: polar residues; it reads SKLVNSRQTEPSVNTGR. Residues 881 to 898 are compositionally biased toward low complexity; sequence QTSASQRSSSLPPSSRKA. Phosphoserine is present on serine 926. The segment covering 975–985 has biased composition (basic and acidic residues); sequence EEKKYSEKNSD. Residues 1040 to 1105 adopt a coiled-coil conformation; it reads RTLAETERFF…GSVRMTLKKF (66 aa).

In terms of assembly, interacts with CCP110, CEP97 and KIF24. In terms of processing, TTBK2-mediated phosphorylation at Ser-710 and Ser-717, promotes its ubiquitination at Lys-713 leading to proteasomal degradation, loss of MPHOSPH9 facilitates the removal of the CP110-CEP97 complex from the mother centrioles, promoting the initiation of ciliogenesis. Phosphorylated in M (mitotic) phase. Ubiquitinated at Lys-713, leading to proteasomal degradation.

Its subcellular location is the cytoplasm. The protein resides in the cytoskeleton. It localises to the microtubule organizing center. The protein localises to the centrosome. It is found in the centriole. Its subcellular location is the golgi apparatus membrane. Negatively regulates cilia formation by recruiting the CP110-CEP97 complex (a negative regulator of ciliogenesis) at the distal end of the mother centriole in ciliary cells. At the beginning of cilia formation, MPHOSPH9 undergoes TTBK2-mediated phosphorylation and degradation via the ubiquitin-proteasome system and removes itself and the CP110-CEP97 complex from the distal end of the mother centriole, which subsequently promotes cilia formation. The polypeptide is M-phase phosphoprotein 9 (Mphosph9) (Mus musculus (Mouse)).